The following is a 333-amino-acid chain: Fe(3+)-citrate import system permease protein YfmD (333 aa).

Transmembrane regions (helical) follow at residues 13-33 (LMMF…NLSV), 67-87 (TLIG…MQAM), 97-117 (IFGV…ILPA), 121-141 (SSVI…YMIA), 151-171 (LALS…AIII), 201-221 (FSVI…VLGL), 238-258 (ILIS…AGPI), 279-299 (YVLP…DVLA), and 302-322 (IAFP…TPFF).

It belongs to the binding-protein-dependent transport system permease family. FecCD subfamily. The complex is composed of one ATP-binding protein (YfmF), two transmembrane proteins (YfmD and YfmE) and a solute-binding protein (YfmC).

The protein localises to the cell membrane. Functionally, part of the ABC transporter complex YfmCDEF involved in citrate-dependent Fe(3+) import. Involved in the translocation of the substrate across the membrane. This Bacillus subtilis (strain 168) protein is Fe(3+)-citrate import system permease protein YfmD (yfmD).